Consider the following 235-residue polypeptide: Glycerol-3-phosphate acyltransferase (235 aa).

The next 6 helical transmembrane spans lie at leucine 4–glycine 24, valine 56–phenylalanine 76, leucine 94–glycine 114, alanine 122–leucine 142, valine 152–phenylalanine 172, and phenylalanine 191–leucine 211.

This sequence belongs to the PlsY family. Probably interacts with PlsX.

It is found in the cell inner membrane. It catalyses the reaction an acyl phosphate + sn-glycerol 3-phosphate = a 1-acyl-sn-glycero-3-phosphate + phosphate. It functions in the pathway lipid metabolism; phospholipid metabolism. In terms of biological role, catalyzes the transfer of an acyl group from acyl-phosphate (acyl-PO(4)) to glycerol-3-phosphate (G3P) to form lysophosphatidic acid (LPA). This enzyme utilizes acyl-phosphate as fatty acyl donor, but not acyl-CoA or acyl-ACP. This is Glycerol-3-phosphate acyltransferase from Pelodictyon phaeoclathratiforme (strain DSM 5477 / BU-1).